A 292-amino-acid chain; its full sequence is N-acetylneuraminate lyase (292 aa).

Aceneuramate-binding residues include serine 47 and threonine 48. Residue tyrosine 136 is the Proton donor of the active site. Lysine 164 acts as the Schiff-base intermediate with substrate in catalysis. The aceneuramate site is built by threonine 166, glycine 188, aspartate 190, glutamate 191, and serine 207.

It belongs to the DapA family. NanA subfamily. As to quaternary structure, homotetramer.

The protein resides in the cytoplasm. The enzyme catalyses aceneuramate = aldehydo-N-acetyl-D-mannosamine + pyruvate. The protein operates within amino-sugar metabolism; N-acetylneuraminate degradation; D-fructose 6-phosphate from N-acetylneuraminate: step 1/5. Catalyzes the reversible aldol cleavage of N-acetylneuraminic acid (sialic acid; Neu5Ac) to form pyruvate and N-acetylmannosamine (ManNAc) via a Schiff base intermediate. This is N-acetylneuraminate lyase from Actinobacillus pleuropneumoniae serotype 5b (strain L20).